We begin with the raw amino-acid sequence, 94 residues long: Co-chaperonin GroES (94 aa).

It belongs to the GroES chaperonin family. Heptamer of 7 subunits arranged in a ring. Interacts with the chaperonin GroEL.

Its subcellular location is the cytoplasm. Together with the chaperonin GroEL, plays an essential role in assisting protein folding. The GroEL-GroES system forms a nano-cage that allows encapsulation of the non-native substrate proteins and provides a physical environment optimized to promote and accelerate protein folding. GroES binds to the apical surface of the GroEL ring, thereby capping the opening of the GroEL channel. This chain is Co-chaperonin GroES, found in Ligilactobacillus salivarius (strain UCC118) (Lactobacillus salivarius).